The primary structure comprises 1956 residues: Histone-lysine N-methyltransferase SETD1B (1956 aa).

Over residues 1–20 (MSFKEAKPGERGKNPEDHGR) the composition is skewed to basic and acidic residues. Positions 1-46 (MSFKEAKPGERGKNPEDHGRKQTASWINGMEAGNQPSTSGEKKSHH) are disordered. Residues 111 to 199 (DEFYVGPVPP…NIIHVELDTK (89 aa)) form the RRM domain. Disordered regions lie at residues 226–478 (LDAS…LEAE), 502–637 (IAGD…VTPS), 662–696 (GFPPLPPPPPPQPGFPMPPPLPPPPPPTHPSVTVP), 926–1148 (KEPP…DEMQ), 1341–1386 (EDLP…TLTS), 1420–1464 (PTFP…VPSP), 1512–1553 (HLTS…NYET), 1627–1655 (TKHKKSRNSRHNNRYDEFSTVPSPEFSPP), and 1766–1790 (IDTQGKSIPAQPQASTRAGSERRSE). 3 stretches are compositionally biased toward polar residues: residues 254-290 (VTPNSSTPFSHDTAYSSSRQGTPNSYSQFTPQSQGTP), 298-312 (PFSQDSSYSSRQTTP), and 346-361 (SSGSYRGTEHTFNVTR). Pro residues predominate over residues 363–373 (QPEPVQVPRTP). 3 stretches are compositionally biased toward polar residues: residues 375 to 407 (LSHSSGNYKSAFSPYQGNTVFPQTDESQYPQTS), 416 to 432 (GPQTSDSYSDAGCNSAS), and 451 to 464 (DSTTEQKASFSQTP). Residues 517-527 (SPISSSSSQLS) are compositionally biased toward low complexity. 2 stretches are compositionally biased toward polar residues: residues 535–551 (GSRYQDVTPSSRPSSTG) and 575–593 (SLCQNSRSASPIDQINQSG). The span at 594-605 (RKTESLDKKELV) shows a compositional bias: basic and acidic residues. Over residues 625 to 634 (EDMEISDDEV) the composition is skewed to acidic residues. Residues 986 to 1000 (SEGEEEVESEGDDGE) show a composition bias toward acidic residues. A compositionally biased stretch (basic and acidic residues) spans 1001-1011 (TSDKEDSSSEK). Residues 1068–1122 (DSSDESEESSEYESSSDSDEKEEEDDEEEELVFGDDQSEDQDLGQEYEVETDREE) are compositionally biased toward acidic residues. Basic and acidic residues predominate over residues 1341–1352 (EDLPRTPGRDIV). 2 stretches are compositionally biased toward polar residues: residues 1358–1367 (LGKSQSTETV) and 1450–1462 (EPTSASLTMNSVP). Over residues 1541 to 1551 (SAHEFETEKNY) the composition is skewed to basic and acidic residues. A compositionally biased stretch (basic residues) spans 1628–1638 (KHKKSRNSRHN). A compositionally biased stretch (polar residues) spans 1769 to 1783 (QGKSIPAQPQASTRA). A RxxxRR motif motif is present at residues 1788 to 1793 (RSEQRR). One can recognise an SET domain in the interval 1817–1934 (KKLRFCKSHI…VNEEITYDYK (118 aa)). Residue Tyr-1933 participates in S-adenosyl-L-methionine binding. A Post-SET domain is found at 1940 to 1956 (VKIPCLCGAENCRGTLN).

Belongs to the class V-like SAM-binding methyltransferase superfamily. Component of the SET1B/COMPASS complex.

The protein resides in the nucleus speckle. Its subcellular location is the chromosome. The catalysed reaction is L-lysyl(4)-[histone H3] + 3 S-adenosyl-L-methionine = N(6),N(6),N(6)-trimethyl-L-lysyl(4)-[histone H3] + 3 S-adenosyl-L-homocysteine + 3 H(+). Its function is as follows. Histone methyltransferase that specifically methylates 'Lys-4' of histone H3, when part of the SET1 histone methyltransferase (HMT) complex, but not if the neighboring 'Lys-9' residue is already methylated. H3 'Lys-4' methylation represents a specific tag for epigenetic transcriptional activation. This is Histone-lysine N-methyltransferase SETD1B (setd1b) from Xenopus tropicalis (Western clawed frog).